We begin with the raw amino-acid sequence, 306 residues long: Ribosomal RNA small subunit methyltransferase H (306 aa).

Residues Gly-36–His-38, Asp-56, Phe-80, Asp-97, and Gln-104 each bind S-adenosyl-L-methionine. Residues Ala-280–Ala-306 are disordered.

It belongs to the methyltransferase superfamily. RsmH family.

The protein resides in the cytoplasm. It carries out the reaction cytidine(1402) in 16S rRNA + S-adenosyl-L-methionine = N(4)-methylcytidine(1402) in 16S rRNA + S-adenosyl-L-homocysteine + H(+). In terms of biological role, specifically methylates the N4 position of cytidine in position 1402 (C1402) of 16S rRNA. The protein is Ribosomal RNA small subunit methyltransferase H of Polaromonas naphthalenivorans (strain CJ2).